Consider the following 58-residue polypeptide: UPF0391 membrane protein VP0082 (58 aa).

2 helical membrane passes run 4–24 (WMFI…SGIA) and 30–50 (VAQV…VFVI).

The protein belongs to the UPF0391 family.

It localises to the cell membrane. The chain is UPF0391 membrane protein VP0082 from Vibrio parahaemolyticus serotype O3:K6 (strain RIMD 2210633).